The following is a 699-amino-acid chain: Elongation factor G (699 aa).

The tr-type G domain maps to 8 to 288; that stretch reads EDYRNFGIMA…AVVDYLPSPM (281 aa). GTP-binding positions include 17-24, 86-90, and 140-143; these read AHIDAGKT, DTPGH, and NKMD.

It belongs to the TRAFAC class translation factor GTPase superfamily. Classic translation factor GTPase family. EF-G/EF-2 subfamily.

It localises to the cytoplasm. In terms of biological role, catalyzes the GTP-dependent ribosomal translocation step during translation elongation. During this step, the ribosome changes from the pre-translocational (PRE) to the post-translocational (POST) state as the newly formed A-site-bound peptidyl-tRNA and P-site-bound deacylated tRNA move to the P and E sites, respectively. Catalyzes the coordinated movement of the two tRNA molecules, the mRNA and conformational changes in the ribosome. This chain is Elongation factor G, found in Rhizobium leguminosarum bv. trifolii (strain WSM2304).